We begin with the raw amino-acid sequence, 86 residues long: Large ribosomal subunit protein bL31 (86 aa).

Residues 64 to 86 (KYGMGSANSSESKDQKEEKDSKK) form a disordered region. Residues 74–86 (ESKDQKEEKDSKK) show a composition bias toward basic and acidic residues.

Belongs to the bacterial ribosomal protein bL31 family. Type A subfamily. As to quaternary structure, part of the 50S ribosomal subunit.

Functionally, binds the 23S rRNA. The polypeptide is Large ribosomal subunit protein bL31 (Prochlorococcus marinus (strain MIT 9301)).